Consider the following 148-residue polypeptide: MAESDWDTVTVLRKKGPSAAQAKSKQAVLAAQRRGEDVETSKKWAAGQNKQHFITKNTAKLDRETEELHHDRVPLEVGKVIQQGRQSKGMTQKDLATKINEKPQVIADYESGRAIPNNQVMGKIERAIGLKLRGKDIGKPLETGPKGK.

The disordered stretch occupies residues 1–26 (MAESDWDTVTVLRKKGPSAAQAKSKQ). Residues 81–135 (IQQGRQSKGMTQKDLATKINEKPQVIADYESGRAIPNNQVMGKIERAIGLKLRGK) form the HTH cro/C1-type domain. Positions 92–111 (QKDLATKINEKPQVIADYES) form a DNA-binding region, H-T-H motif.

The protein localises to the nucleus. In terms of biological role, probable transcriptional coactivator. This Gallus gallus (Chicken) protein is Endothelial differentiation-related factor 1 homolog (EDF1).